The sequence spans 266 residues: PTS system sorbose-specific EIIC component (266 aa).

In terms of domain architecture, PTS EIIC type-4 spans 1–237 (MEISTLQIIA…GGVGVIIALI (237 aa)). The next 7 membrane-spanning stretches (helical) occupy residues 3-23 (ISTLQIIAIFIFSCIAGMGSV), 33-53 (LIACTVIGLILGDLKTGVMLG), 79-99 (IISAILVIVGHQSIAIGIAIA), 100-120 (LPVAAAGQVLTVFARTITVVF), 151-171 (VAIPALVVSLFVSADMVSSML), 183-203 (QIAGGFIVVVGYAMVLRMMGV), and 219-239 (YLDFSLLAFGGVGVIIALIYI).

The protein resides in the cell inner membrane. In terms of biological role, the phosphoenolpyruvate-dependent sugar phosphotransferase system (PTS), a major carbohydrate active transport system, catalyzes the phosphorylation of incoming sugar substrates concomitant with their translocation across the cell membrane. The enzyme II SorABFM PTS system is involved in L-sorbose transport. In Klebsiella pneumoniae, this protein is PTS system sorbose-specific EIIC component.